The chain runs to 326 residues: MSKSNQKIASIEQLSNNEGIISALAFDQRGALKRMMAKHQTEEPTVAQIEQLKVLVAEELTQYASSILLDPEYGLPASDARNKDCGLLLAYEKTGYDVNAKGRLPDCLVEWSAKRLKEQGANAVKFLLYYDVDDAEEINIQKKAYIERIGSECVAEDIPFFLEVLTYDDNIPDNGSVEFAKVKPRKVNEAMKLFSEPRFNVDVLKVEVPVNMKYVEGFAEGEVVYTKEEAAQHFKNQDAATHLPYIYLSAGVSAELFQETLKFAHEAGAKFNGVLCGRATWSGAVQVYIEQGEDAAREWLRTTGFKNIDDLNKVLKDTATSWKQRK.

The protein belongs to the aldolase LacD family.

The catalysed reaction is D-tagatofuranose 1,6-bisphosphate = D-glyceraldehyde 3-phosphate + dihydroxyacetone phosphate. Its pathway is carbohydrate metabolism; D-tagatose 6-phosphate degradation; D-glyceraldehyde 3-phosphate and glycerone phosphate from D-tagatose 6-phosphate: step 2/2. The protein is Tagatose 1,6-diphosphate aldolase of Staphylococcus aureus (strain MSSA476).